The chain runs to 85 residues: Small ribosomal subunit protein bS16 (85 aa).

Belongs to the bacterial ribosomal protein bS16 family.

This is Small ribosomal subunit protein bS16 from Metamycoplasma arthritidis (strain 158L3-1) (Mycoplasma arthritidis).